We begin with the raw amino-acid sequence, 285 residues long: Probable endonuclease 4 (285 aa).

Residues H69, H109, E145, D179, H182, H216, D229, H231, and E261 each contribute to the Zn(2+) site.

This sequence belongs to the AP endonuclease 2 family. Zn(2+) is required as a cofactor.

It catalyses the reaction Endonucleolytic cleavage to 5'-phosphooligonucleotide end-products.. Functionally, endonuclease IV plays a role in DNA repair. It cleaves phosphodiester bonds at apurinic or apyrimidinic (AP) sites, generating a 3'-hydroxyl group and a 5'-terminal sugar phosphate. The protein is Probable endonuclease 4 of Shigella sonnei (strain Ss046).